Consider the following 675-residue polypeptide: UvrABC system protein B (675 aa).

Residues 32 to 417 enclose the Helicase ATP-binding domain; the sequence is EGLSDGLAYQ…EHAGQVVEQV (386 aa). Residue 45–52 participates in ATP binding; that stretch reads GVTGSGKT. The Beta-hairpin motif lies at 98–121; sequence YYDYYQPEAYVPSRDLFIEKDSAI. A Helicase C-terminal domain is found at 436–602; the sequence is QVDDLMSEIN…QIKKQVKDII (167 aa). In terms of domain architecture, UVR spans 634–669; the sequence is IKEIAKLEKAMQQAARDLQFEEAAVLRDRIRDIKEN.

The protein belongs to the UvrB family. As to quaternary structure, forms a heterotetramer with UvrA during the search for lesions. Interacts with UvrC in an incision complex.

The protein localises to the cytoplasm. Functionally, the UvrABC repair system catalyzes the recognition and processing of DNA lesions. A damage recognition complex composed of 2 UvrA and 2 UvrB subunits scans DNA for abnormalities. Upon binding of the UvrA(2)B(2) complex to a putative damaged site, the DNA wraps around one UvrB monomer. DNA wrap is dependent on ATP binding by UvrB and probably causes local melting of the DNA helix, facilitating insertion of UvrB beta-hairpin between the DNA strands. Then UvrB probes one DNA strand for the presence of a lesion. If a lesion is found the UvrA subunits dissociate and the UvrB-DNA preincision complex is formed. This complex is subsequently bound by UvrC and the second UvrB is released. If no lesion is found, the DNA wraps around the other UvrB subunit that will check the other stand for damage. This is UvrABC system protein B from Neisseria meningitidis serogroup B (strain ATCC BAA-335 / MC58).